The primary structure comprises 326 residues: Protease HtpX homolog (326 aa).

The next 2 helical transmembrane spans lie at 10 to 30 (LNMA…ALAV) and 41 to 61 (VGLM…QWLF). His-147 is a Zn(2+) binding site. Glu-148 is a catalytic residue. His-151 lines the Zn(2+) pocket. The next 2 membrane-spanning stretches (helical) occupy residues 159–179 (LLMA…WIFW) and 197–217 (LLFL…LLVL). Position 224 (Glu-224) interacts with Zn(2+).

This sequence belongs to the peptidase M48B family. Zn(2+) is required as a cofactor.

Its subcellular location is the cell membrane. The sequence is that of Protease HtpX homolog from Saccharolobus islandicus (strain Y.N.15.51 / Yellowstone #2) (Sulfolobus islandicus).